The following is a 319-amino-acid chain: Urease accessory protein UreD (319 aa).

The disordered stretch occupies residues 284–319 (RLSTPQPPREWPLQEEGTFSNERFTKDHQSPSASPH).

It belongs to the UreD family. In terms of assembly, ureD, UreF and UreG form a complex that acts as a GTP-hydrolysis-dependent molecular chaperone, activating the urease apoprotein by helping to assemble the nickel containing metallocenter of UreC. The UreE protein probably delivers the nickel.

It localises to the cytoplasm. In terms of biological role, required for maturation of urease via the functional incorporation of the urease nickel metallocenter. This is Urease accessory protein UreD from Prochlorococcus marinus (strain MIT 9313).